We begin with the raw amino-acid sequence, 233 residues long: Ribosomal RNA-processing protein 14-C (233 aa).

Positions 32–65 form a coiled coil; the sequence is DRALLLQRRKEKAKARAEAKKLAKKESKAKQESK. Residues 47-64 are compositionally biased toward basic and acidic residues; sequence RAEAKKLAKKESKAKQES. Disordered stretches follow at residues 47–87, 130–149, and 164–233; these read RAEA…DNHK, KRRIESMDEEKRRKIEESDK, and DNEQ…SKKK. Serine 75 is subject to Phosphoserine. Positions 122-223 form a coiled coil; it reads ALKHLEAKKR…ESKKSKKGKA (102 aa). Composition is skewed to basic and acidic residues over residues 133 to 149 and 180 to 209; these read IESMDEEKRRKIEESDK and KKKSSDAWKERKDNEKKAMLMRQQRREENL. Residues 210 to 233 show a composition bias toward basic residues; sequence KKRRESKKSKKGKAPKKKKPSKKK.

It belongs to the SURF6 family. As to quaternary structure, component of the 90S and 60S pre-ribosomal particles.

The protein resides in the nucleus. It localises to the nucleolus. Its function is as follows. Involved in ribosome biogenesis and cell polarity. Required for the synthesis of both 40S and 60S ribosomal subunits and may also play some direct role in correct positioning of the mitotic spindle during mitosis. The sequence is that of Ribosomal RNA-processing protein 14-C (rrp14c) from Schizosaccharomyces pombe (strain 972 / ATCC 24843) (Fission yeast).